The sequence spans 451 residues: 23S rRNA (uracil(1939)-C(5))-methyltransferase RlmD (451 aa).

The region spanning 20–78 is the TRAM domain; sequence QIPAGKKQRLTIERLSDDGRGIAFLEGKTWFVAGSLAGEEVEARVLNARGKVVEARTER. 4 residues coordinate [4Fe-4S] cluster: Cys-91, Cys-97, Cys-100, and Cys-179. S-adenosyl-L-methionine contacts are provided by Gln-283, Phe-312, Asn-317, Glu-333, Asp-360, and Asp-381. Cys-407 (nucleophile) is an active-site residue.

It belongs to the class I-like SAM-binding methyltransferase superfamily. RNA M5U methyltransferase family. RlmD subfamily.

The catalysed reaction is uridine(1939) in 23S rRNA + S-adenosyl-L-methionine = 5-methyluridine(1939) in 23S rRNA + S-adenosyl-L-homocysteine + H(+). Functionally, catalyzes the formation of 5-methyl-uridine at position 1939 (m5U1939) in 23S rRNA. The chain is 23S rRNA (uracil(1939)-C(5))-methyltransferase RlmD from Pseudomonas savastanoi pv. phaseolicola (strain 1448A / Race 6) (Pseudomonas syringae pv. phaseolicola (strain 1448A / Race 6)).